We begin with the raw amino-acid sequence, 321 residues long: Lipoyl synthase (321 aa).

The [4Fe-4S] cluster site is built by cysteine 68, cysteine 73, cysteine 79, cysteine 94, cysteine 98, cysteine 101, and serine 308. One can recognise a Radical SAM core domain in the interval 80-297 (FNHGTATFMI…KEVALELGFT (218 aa)).

It belongs to the radical SAM superfamily. Lipoyl synthase family. The cofactor is [4Fe-4S] cluster.

It localises to the cytoplasm. It catalyses the reaction [[Fe-S] cluster scaffold protein carrying a second [4Fe-4S](2+) cluster] + N(6)-octanoyl-L-lysyl-[protein] + 2 oxidized [2Fe-2S]-[ferredoxin] + 2 S-adenosyl-L-methionine + 4 H(+) = [[Fe-S] cluster scaffold protein] + N(6)-[(R)-dihydrolipoyl]-L-lysyl-[protein] + 4 Fe(3+) + 2 hydrogen sulfide + 2 5'-deoxyadenosine + 2 L-methionine + 2 reduced [2Fe-2S]-[ferredoxin]. Its pathway is protein modification; protein lipoylation via endogenous pathway; protein N(6)-(lipoyl)lysine from octanoyl-[acyl-carrier-protein]: step 2/2. Catalyzes the radical-mediated insertion of two sulfur atoms into the C-6 and C-8 positions of the octanoyl moiety bound to the lipoyl domains of lipoate-dependent enzymes, thereby converting the octanoylated domains into lipoylated derivatives. The chain is Lipoyl synthase from Vibrio cholerae serotype O1 (strain ATCC 39315 / El Tor Inaba N16961).